A 232-amino-acid polypeptide reads, in one-letter code: Zinc-finger homeodomain protein 5 (232 aa).

Residues 1 to 11 (MELSEHEEDAG) are compositionally biased toward acidic residues. A disordered region spans residues 1-25 (MELSEHEEDAGDVGGGCSSPPTPPH). The segment at 40-86 (YHECLRNHAAASGGHVVDGCGEFMPASTEEPLACAACGCHRSFHRRD) adopts a ZF-HD dimerization-type; degenerate zinc-finger fold. Positions 126–170 (GLPFPGYGTPSGGTGTTTASSSDERLRPSPVQPRRRSRTTFTREQ) are disordered. The segment at residues 159-222 (RRRSRTTFTR…NNKHSFKQKQ (64 aa)) is a DNA-binding region (homeobox).

As to quaternary structure, homo- and heterodimer with other ZFHD proteins.

The protein localises to the nucleus. In terms of biological role, putative transcription factor. In Oryza sativa subsp. indica (Rice), this protein is Zinc-finger homeodomain protein 5 (ZHD5).